The following is a 429-amino-acid chain: UDP-N-acetylglucosamine 1-carboxyvinyltransferase (429 aa).

Residue 22–23 (KN) participates in phosphoenolpyruvate binding. Residue Arg102 coordinates UDP-N-acetyl-alpha-D-glucosamine. The active-site Proton donor is Cys126. Residue Cys126 is modified to 2-(S-cysteinyl)pyruvic acid O-phosphothioketal. UDP-N-acetyl-alpha-D-glucosamine-binding residues include Asp316 and Ile338.

It belongs to the EPSP synthase family. MurA subfamily.

Its subcellular location is the cytoplasm. It catalyses the reaction phosphoenolpyruvate + UDP-N-acetyl-alpha-D-glucosamine = UDP-N-acetyl-3-O-(1-carboxyvinyl)-alpha-D-glucosamine + phosphate. Its pathway is cell wall biogenesis; peptidoglycan biosynthesis. In terms of biological role, cell wall formation. Adds enolpyruvyl to UDP-N-acetylglucosamine. In Methylorubrum extorquens (strain PA1) (Methylobacterium extorquens), this protein is UDP-N-acetylglucosamine 1-carboxyvinyltransferase.